An 81-amino-acid polypeptide reads, in one-letter code: Sulfur carrier protein TusA (81 aa).

Catalysis depends on Cys-19, which acts as the Cysteine persulfide intermediate.

The protein belongs to the sulfur carrier protein TusA family.

The protein resides in the cytoplasm. Its function is as follows. Sulfur carrier protein which probably makes part of a sulfur-relay system. The polypeptide is Sulfur carrier protein TusA (Shewanella frigidimarina (strain NCIMB 400)).